Here is a 447-residue protein sequence, read N- to C-terminus: Probable glycine dehydrogenase (decarboxylating) subunit 1 (447 aa).

It belongs to the GcvP family. N-terminal subunit subfamily. In terms of assembly, the glycine cleavage system is composed of four proteins: P, T, L and H. In this organism, the P 'protein' is a heterodimer of two subunits.

It carries out the reaction N(6)-[(R)-lipoyl]-L-lysyl-[glycine-cleavage complex H protein] + glycine + H(+) = N(6)-[(R)-S(8)-aminomethyldihydrolipoyl]-L-lysyl-[glycine-cleavage complex H protein] + CO2. Functionally, the glycine cleavage system catalyzes the degradation of glycine. The P protein binds the alpha-amino group of glycine through its pyridoxal phosphate cofactor; CO(2) is released and the remaining methylamine moiety is then transferred to the lipoamide cofactor of the H protein. This is Probable glycine dehydrogenase (decarboxylating) subunit 1 from Sulfolobus acidocaldarius (strain ATCC 33909 / DSM 639 / JCM 8929 / NBRC 15157 / NCIMB 11770).